The primary structure comprises 549 residues: Leiomodin-2 (549 aa).

A tropomyosin-binding region spans residues 1 to 42 (MSTFGYRRGLSKYESIDEDELLASLTAEELKELERELEDIEP). An interaction with tropomyosin alpha region spans residues 1–47 (MSTFGYRRGLSKYESIDEDELLASLTAEELKELERELEDIEPDRNLP). 3 interaction with actin regions span residues 1–164 (MSTF…PDNS), 165–499 (KPKT…KEIK), and 523–542 (AHEN…LRRV). Ser-11, Ser-15, and Ser-24 each carry phosphoserine. Disordered stretches follow at residues 91-166 (KLAE…NSKP), 179-200 (TNGN…HPCG), 358-455 (MDKQ…PGKK), and 469-534 (ESAQ…IRGS). Composition is skewed to acidic residues over residues 95 to 105 (EDKEESEEELI) and 113 to 143 (VSEE…EEVT). Polar residues-rich tracts occupy residues 150–163 (INGT…NPDN) and 179–192 (TNGN…NTES). Residues 358-376 (MDKQRQKRMQEQKQQEGHD) show a composition bias toward basic and acidic residues. Over residues 390 to 401 (TPGSSPYASPRQ) the composition is skewed to polar residues. Phosphoserine is present on Ser-406. Pro residues predominate over residues 420–452 (PPSPVAPPPPPPPPPLPPHMLPPPPPPPAPPLP). Residues 457 to 515 (ITRNIAEVIKQQESAQRALQNGQRKKKGKKVKKQPNNILKEIKNSLRSVQEKKMEESSR) are a coiled coil. The span at 469–478 (ESAQRALQNG) shows a compositional bias: polar residues. A compositionally biased stretch (basic residues) spans 479–489 (QRKKKGKKVKK). Over residues 496–514 (KEIKNSLRSVQEKKMEESS) the composition is skewed to basic and acidic residues. A WH2 domain is found at 523–542 (AHENLMEAIRGSSIRQLRRV).

The protein belongs to the tropomodulin family. As to quaternary structure, can bind at least three actin monomers and thereby provides a nucleus for actin filament formation. Interacts (via N-terminus) with tropomyosin alpha (TPM1) (via N-terminus). May also interact with TPM2 (via N-terminus). Interacts with FLII.

It is found in the cytoplasm. The protein localises to the myofibril. Its subcellular location is the sarcomere. The protein resides in the m line. It localises to the cytoskeleton. Its function is as follows. Mediates nucleation of actin filaments and thereby promotes actin polymerization. Plays a role in the regulation of actin filament length. Required for normal sarcomere organization in the heart, and for normal heart function. This Rattus norvegicus (Rat) protein is Leiomodin-2 (Lmod2).